The sequence spans 319 residues: NADH-quinone oxidoreductase subunit H 1 (319 aa).

The next 9 membrane-spanning stretches (helical) occupy residues 5–25 (ILTA…AGVF), 78–98 (LAPA…AFGE), 109–129 (VMFL…GALA), 147–167 (LAYE…AGSL), 179–199 (VWFI…GIAA), 214–234 (LVGG…FLGE), 238–258 (ILLV…GPWL), 262–282 (IWFG…RAAL), and 294–314 (AWKV…FIVV).

This sequence belongs to the complex I subunit 1 family. In terms of assembly, NDH-1 is composed of 14 different subunits. Subunits NuoA, H, J, K, L, M, N constitute the membrane sector of the complex.

Its subcellular location is the cell inner membrane. The enzyme catalyses a quinone + NADH + 5 H(+)(in) = a quinol + NAD(+) + 4 H(+)(out). In terms of biological role, NDH-1 shuttles electrons from NADH, via FMN and iron-sulfur (Fe-S) centers, to quinones in the respiratory chain. The immediate electron acceptor for the enzyme in this species is believed to be ubiquinone. Couples the redox reaction to proton translocation (for every two electrons transferred, four hydrogen ions are translocated across the cytoplasmic membrane), and thus conserves the redox energy in a proton gradient. This subunit may bind ubiquinone. The sequence is that of NADH-quinone oxidoreductase subunit H 1 from Rhodopseudomonas palustris (strain BisA53).